The primary structure comprises 246 residues: Triosephosphate isomerase (246 aa).

9–11 (NWK) provides a ligand contact to substrate. Residue H95 is the Electrophile of the active site. The active-site Proton acceptor is E165. Substrate contacts are provided by residues G171, S210, and 231-232 (GG).

Belongs to the triosephosphate isomerase family. Homodimer.

The protein resides in the cytoplasm. It carries out the reaction D-glyceraldehyde 3-phosphate = dihydroxyacetone phosphate. It participates in carbohydrate biosynthesis; gluconeogenesis. It functions in the pathway carbohydrate degradation; glycolysis; D-glyceraldehyde 3-phosphate from glycerone phosphate: step 1/1. Functionally, involved in the gluconeogenesis. Catalyzes stereospecifically the conversion of dihydroxyacetone phosphate (DHAP) to D-glyceraldehyde-3-phosphate (G3P). The protein is Triosephosphate isomerase of Thermodesulfovibrio yellowstonii (strain ATCC 51303 / DSM 11347 / YP87).